Reading from the N-terminus, the 118-residue chain is Large ribosomal subunit protein bL20 (118 aa).

Belongs to the bacterial ribosomal protein bL20 family.

Binds directly to 23S ribosomal RNA and is necessary for the in vitro assembly process of the 50S ribosomal subunit. It is not involved in the protein synthesizing functions of that subunit. The sequence is that of Large ribosomal subunit protein bL20 from Oceanobacillus iheyensis (strain DSM 14371 / CIP 107618 / JCM 11309 / KCTC 3954 / HTE831).